A 235-amino-acid chain; its full sequence is MFIWTSGRTSSSYRHDEKRNIYQKIRDHDLLDKRKTVTALKAGEDRAILLGLAMMVCSIMMYFLLGITLLRSYMQSVWTEESQCTLLNASITETFNCSFSCGPDCWKLSQYPCLQVYVNLTSSGEKLLLYHTEETIKINQKCSYIPKCGKNFEESMSLVNVVMENFRKYQHFSCYSDPEGNQKSVILTKLYSSNVLFHSLFWPTCMMAGGVAIVAMVKLTQYLSLLCERIQRINR.

The segment at methionine 1 to aspartate 45 is ball and chain. Over methionine 1 to arginine 46 the chain is Cytoplasmic. A helical transmembrane segment spans residues alanine 47 to isoleucine 67. Topologically, residues threonine 68–asparagine 194 are extracellular. Asparagine 88, asparagine 96, and asparagine 119 each carry an N-linked (GlcNAc...) asparagine glycan. The chain crosses the membrane as a helical span at residues valine 195–alanine 215. Residues methionine 216 to arginine 235 are Cytoplasmic-facing.

Belongs to the KCNMB (TC 8.A.14.1) family. KCNMB2 subfamily. In terms of assembly, interacts with KCNMA1 tetramer. There are probably 4 molecules of KCMNB2 per KCNMA1 tetramer. In terms of processing, N-glycosylated. In terms of tissue distribution, expressed in kidney, heart and brain. Highly expressed in ovary. Expressed at low level in other tissues.

It is found in the membrane. Functionally, regulatory subunit of the calcium activated potassium KCNMA1 (maxiK) channel. Modulates the calcium sensitivity and gating kinetics of KCNMA1, thereby contributing to KCNMA1 channel diversity. Acts as a negative regulator that confers rapid and complete inactivation of KCNMA1 channel complex. May participate in KCNMA1 inactivation in chromaffin cells of the adrenal gland or in hippocampal CA1 neurons. The sequence is that of Calcium-activated potassium channel subunit beta-2 (KCNMB2) from Homo sapiens (Human).